The primary structure comprises 371 residues: tRNA-specific 2-thiouridylase MnmA (371 aa).

ATP contacts are provided by residues 11-18 and Met-37; that span reads GMSGGVDS. Positions 97-99 are interaction with target base in tRNA; it reads NPD. The active-site Nucleophile is the Cys-102. An intrachain disulfide couples Cys-102 to Cys-199. Gly-127 provides a ligand contact to ATP. The tract at residues 149-151 is interaction with tRNA; that stretch reads KDQ. Cys-199 serves as the catalytic Cysteine persulfide intermediate. Positions 311–312 are interaction with tRNA; that stretch reads RY.

The protein belongs to the MnmA/TRMU family.

Its subcellular location is the cytoplasm. It catalyses the reaction S-sulfanyl-L-cysteinyl-[protein] + uridine(34) in tRNA + AH2 + ATP = 2-thiouridine(34) in tRNA + L-cysteinyl-[protein] + A + AMP + diphosphate + H(+). In terms of biological role, catalyzes the 2-thiolation of uridine at the wobble position (U34) of tRNA, leading to the formation of s(2)U34. This is tRNA-specific 2-thiouridylase MnmA from Idiomarina loihiensis (strain ATCC BAA-735 / DSM 15497 / L2-TR).